We begin with the raw amino-acid sequence, 188 residues long: Probable DNA-directed RNA polymerase subunit delta (188 aa).

One can recognise an HTH HARE-type domain in the interval Leu-14–Trp-81. The interval Glu-96–Asp-188 is disordered. Acidic residues-rich tracts occupy residues Ile-118–Asp-150 and Glu-158–Asp-188.

This sequence belongs to the RpoE family. RNAP is composed of a core of 2 alpha, a beta and a beta' subunits. The core is associated with a delta subunit and one of several sigma factors.

Participates in both the initiation and recycling phases of transcription. In the presence of the delta subunit, RNAP displays an increased specificity of transcription, a decreased affinity for nucleic acids, and an increased efficiency of RNA synthesis because of enhanced recycling. This Lactococcus lactis subsp. cremoris (strain MG1363) protein is Probable DNA-directed RNA polymerase subunit delta.